Reading from the N-terminus, the 229-residue chain is Cytochrome c oxidase subunit 2 (229 aa).

Over 1–26 (MSTWANLGLQDSASPLMEQLIFFHDH) the chain is Mitochondrial intermembrane. The chain crosses the membrane as a helical span at residues 27 to 48 (ALLILVMITVLVGYLMVMLFFN). Topologically, residues 49 to 62 (SYVNRFLLHGQLIE) are mitochondrial matrix. Residues 63-82 (MIWTILPAIILLFIAMPSLR) traverse the membrane as a helical segment. At 83–229 (LLYLLDEINE…IKWISDKVNS (147 aa)) the chain is on the mitochondrial intermembrane side. Residues histidine 161, cysteine 196, glutamate 198, cysteine 200, histidine 204, and methionine 207 each contribute to the Cu cation site. Residue glutamate 198 coordinates Mg(2+).

This sequence belongs to the cytochrome c oxidase subunit 2 family. As to quaternary structure, component of the cytochrome c oxidase (complex IV, CIV), a multisubunit enzyme composed of a catalytic core of 3 subunits and several supernumerary subunits. The complex exists as a monomer or a dimer and forms supercomplexes (SCs) in the inner mitochondrial membrane with ubiquinol-cytochrome c oxidoreductase (cytochrome b-c1 complex, complex III, CIII). Requires Cu cation as cofactor.

It localises to the mitochondrion inner membrane. It catalyses the reaction 4 Fe(II)-[cytochrome c] + O2 + 8 H(+)(in) = 4 Fe(III)-[cytochrome c] + 2 H2O + 4 H(+)(out). Component of the cytochrome c oxidase, the last enzyme in the mitochondrial electron transport chain which drives oxidative phosphorylation. The respiratory chain contains 3 multisubunit complexes succinate dehydrogenase (complex II, CII), ubiquinol-cytochrome c oxidoreductase (cytochrome b-c1 complex, complex III, CIII) and cytochrome c oxidase (complex IV, CIV), that cooperate to transfer electrons derived from NADH and succinate to molecular oxygen, creating an electrochemical gradient over the inner membrane that drives transmembrane transport and the ATP synthase. Cytochrome c oxidase is the component of the respiratory chain that catalyzes the reduction of oxygen to water. Electrons originating from reduced cytochrome c in the intermembrane space (IMS) are transferred via the dinuclear copper A center (CU(A)) of subunit 2 and heme A of subunit 1 to the active site in subunit 1, a binuclear center (BNC) formed by heme A3 and copper B (CU(B)). The BNC reduces molecular oxygen to 2 water molecules using 4 electrons from cytochrome c in the IMS and 4 protons from the mitochondrial matrix. The chain is Cytochrome c oxidase subunit 2 (mt:CoII) from Drosophila subobscura (Fruit fly).